Consider the following 823-residue polypeptide: Leucine--tRNA ligase (823 aa).

The 'HIGH' region signature appears at 41–51; it reads PYPSGTLHVGH. The short motif at 580–584 is the 'KMSKS' region element; the sequence is KMSKS. Lys583 is an ATP binding site.

It belongs to the class-I aminoacyl-tRNA synthetase family.

It is found in the cytoplasm. It catalyses the reaction tRNA(Leu) + L-leucine + ATP = L-leucyl-tRNA(Leu) + AMP + diphosphate. The protein is Leucine--tRNA ligase of Thermosipho melanesiensis (strain DSM 12029 / CIP 104789 / BI429).